A 464-amino-acid polypeptide reads, in one-letter code: Glutamate--tRNA ligase (464 aa).

Positions 11–21 (PSPTGYLHIGG) match the 'HIGH' region motif. Positions 253–257 (KLSKR) match the 'KMSKS' region motif. Lys-256 provides a ligand contact to ATP.

Belongs to the class-I aminoacyl-tRNA synthetase family. Glutamate--tRNA ligase type 1 subfamily. Monomer.

The protein localises to the cytoplasm. It catalyses the reaction tRNA(Glu) + L-glutamate + ATP = L-glutamyl-tRNA(Glu) + AMP + diphosphate. In terms of biological role, catalyzes the attachment of glutamate to tRNA(Glu) in a two-step reaction: glutamate is first activated by ATP to form Glu-AMP and then transferred to the acceptor end of tRNA(Glu). This is Glutamate--tRNA ligase from Metamycoplasma arthritidis (strain 158L3-1) (Mycoplasma arthritidis).